Consider the following 229-residue polypeptide: Ribonuclease S-6 (229 aa).

The N-terminal stretch at 1–27 is a signal peptide; it reads MGITGMIYMVPMVFSLIVLISCSSTMG. Gln-36 is a binding site for RNA. A disulfide bridge links Cys-42 with Cys-49. His-60 contributes to the RNA binding site. His-60 serves as the catalytic Proton donor. Residues Cys-75 and Cys-119 are joined by a disulfide bond. 2 N-linked (GlcNAc) asparagine glycosylation sites follow: Asn-77 and Asn-87. RNA contacts are provided by residues 98–99, Phe-108, 111–112, and 115–116; these read NV, RQ, and KH. The active site involves Gln-112. His-116 serves as the catalytic Proton acceptor. The N-linked (GlcNAc...) (high mannose) asparagine glycan is linked to Asn-145. Disulfide bonds link Cys-184–Cys-222 and Cys-199–Cys-210. An N-linked (GlcNAc) asparagine; alternate glycan is attached at Asn-188. Residues Asn-188 and Asn-203 are each glycosylated (N-linked (GlcNAc...) asparagine; alternate).

It belongs to the RNase T2 family. Post-translationally, the N-glycans attached at Asn-188 and Asn-203 consist of either monosaccharide (GlcNAc) or disaccharide (GlcNAc-GlcNAc) that could not be distinguished.

The enzyme catalyses a ribonucleotidyl-ribonucleotide-RNA + H2O = a 3'-end 3'-phospho-ribonucleotide-RNA + a 5'-end dephospho-ribonucleoside-RNA + H(+). Functionally, self-incompatibility (SI) is the inherited ability of a flowering plant to prevent self-fertilization by discriminating between self and non-self pollen during pollination. In many species, self-incompatibility is controlled by the single, multiallelic locus S. This Pyrus pyrifolia (Chinese pear) protein is Ribonuclease S-6.